A 210-amino-acid polypeptide reads, in one-letter code: uncharacterized protein (210 aa).

2 disordered regions span residues 1–21 and 168–210; these read MHRLFGRKPPTQPTASLTDAI and EALQ…STAQ. Residues 21-175 are a coiled coil; that stretch reads IDSLDKRSDS…ELEALQQESS (155 aa). A compositionally biased stretch (polar residues) spans 174-184; that stretch reads SSWLGDQSTAE.

This sequence belongs to the SNF7 family.

This is an uncharacterized protein from Schizosaccharomyces pombe (strain 972 / ATCC 24843) (Fission yeast).